We begin with the raw amino-acid sequence, 597 residues long: Putative diflavin flavoprotein A 3 (597 aa).

The interval 59–254 is zinc metallo-hydrolase; that stretch reads QRGTTANSYL…YPAQTYAPSH (196 aa). The Flavodoxin-like domain maps to 283–421; that stretch reads VALIYASAYG…MCEEAGTDFA (139 aa). Residues 449–597 form a flavodoxin-reductase-like region; the sequence is LGRLVGSLCV…VHHRKSGDHY (149 aa).

It in the N-terminal section; belongs to the zinc metallo-hydrolase group 3 family. The protein in the C-terminal section; belongs to the flavodoxin reductase family. It depends on Fe cation as a cofactor.

Mediates electron transfer from NADH to oxygen, reducing it to water. This modular protein has 3 redox cofactors, in other organisms the same activity requires 2 or 3 proteins. This is Putative diflavin flavoprotein A 3 (dfa3) from Synechocystis sp. (strain ATCC 27184 / PCC 6803 / Kazusa).